The chain runs to 1763 residues: Collagen alpha-2(IV) chain (1763 aa).

Positions 1–26 are cleaved as a signal peptide; the sequence is MSSRLRIPLWLLLPTTALVYFVTTVS. The 7S domain stretch occupies residues 27 to 42; it reads TQITCRDCTNRGCFCV. The segment at 43-1529 is triple-helical region; that stretch reads GEKGSMGIPG…SGPPGPPGPS (1487 aa). Disordered stretches follow at residues 51–529 and 550–1529; these read PGPQ…PGPK and AGYA…PGPS. Positions 72 to 81 are enriched in low complexity; the sequence is PGPKGQKGSQ. N-linked (GlcNAc...) asparagine glycosylation is present at Asn-126. Positions 135–152 are enriched in pro residues; the sequence is PGLPGPPGMPGFPGPPGV. Basic and acidic residues predominate over residues 190 to 199; sequence FPGEKGDRGD. Positions 206–217 are enriched in pro residues; the sequence is RGPPGEAGPPGN. The span at 225–235 shows a compositional bias: low complexity; the sequence is PKGDPGEQGPR. O-linked (Xyl...) (glycosaminoglycan) serine glycosylation is present at Ala-249. A compositionally biased stretch (low complexity) spans 326-335; sequence DGLPGVPGLP. Positions 400 to 409 are enriched in gly residues; sequence GLPGGPGLPG. Composition is skewed to low complexity over residues 410–419 and 428–453; these read LPGLEGLPGP and IPGAPGVQGPPGLAGPPGAKGEPGPR. The span at 466–481 shows a compositional bias: basic and acidic residues; that stretch reads KDGRPGLDGLPGRKGE. Positions 564-582 are enriched in low complexity; the sequence is LPGIPGATGAPGDDGLPGA. Over residues 583 to 592 the composition is skewed to pro residues; the sequence is PGRPGPPGPP. Composition is skewed to low complexity over residues 699–714 and 731–783; these read DAGLPGLPGLPGAVGP and KDGL…PGIP. Residues 810–832 are compositionally biased toward pro residues; sequence PGLPGPKGEPGPSTTGPPGPPGF. Composition is skewed to low complexity over residues 865–895, 946–977, 1040–1051, 1077–1086, 1108–1146, 1210–1231, 1280–1296, 1367–1386, 1462–1480, and 1499–1510; these read EIGLPGLAGAPGFPGAKGEPGLPGLPGKEGP, FPGQKGQPGFPGVAGAKGEAGLPGLPGAPGQK, PGLPGQPGLRGP, LMGEKGLPGL, PGLKGEAGLPGAPGLPGQDGLPGLPGQKGESGFPGQPGL, PGFPGLKGEPGLPGLEGQPGPR, LPGLPGKDGLPGLPGLK, PAGLPGLPGLKGEPGLPGFP, LPGLDGLPGPSGPPGFAGA, and PGLPGFPGIEGI. Over residues 1511 to 1528 the composition is skewed to pro residues; that stretch reads PGPPGLPGPSGPPGPPGP. In terms of domain architecture, Collagen IV NC1 spans 1533–1756; that stretch reads GFLLVKHSQT…SRCQVCIRSP (224 aa). Intrachain disulfides connect Cys-1548/Cys-1637, Cys-1581/Cys-1634, Cys-1593/Cys-1599, Cys-1656/Cys-1752, Cys-1690/Cys-1749, and Cys-1702/Cys-1709.

Belongs to the type IV collagen family. In terms of assembly, trimers of two alpha 1(IV) and one alpha 2(IV) chain. Type IV collagen forms a mesh-like network linked through intermolecular interactions between 7S domains and between NC1 domains. Prolines at the third position of the tripeptide repeating unit (G-X-Y) are hydroxylated in some or all of the chains. Post-translationally, type IV collagens contain numerous cysteine residues which are involved in inter- and intramolecular disulfide bonding. 12 of these, located in the NC1 domain, are conserved in all known type IV collagens. In terms of processing, the trimeric structure of the NC1 domains is stabilized by covalent bonds between Lys and Met residues.

The protein resides in the secreted. It localises to the extracellular space. It is found in the extracellular matrix. Its subcellular location is the basement membrane. Functionally, collagen type IV is specific for basement membranes. The protein is Collagen alpha-2(IV) chain of Ascaris suum (Pig roundworm).